A 236-amino-acid chain; its full sequence is Aspartate/glutamate leucyltransferase (236 aa).

Belongs to the R-transferase family. Bpt subfamily.

The protein resides in the cytoplasm. It carries out the reaction N-terminal L-glutamyl-[protein] + L-leucyl-tRNA(Leu) = N-terminal L-leucyl-L-glutamyl-[protein] + tRNA(Leu) + H(+). The enzyme catalyses N-terminal L-aspartyl-[protein] + L-leucyl-tRNA(Leu) = N-terminal L-leucyl-L-aspartyl-[protein] + tRNA(Leu) + H(+). Functions in the N-end rule pathway of protein degradation where it conjugates Leu from its aminoacyl-tRNA to the N-termini of proteins containing an N-terminal aspartate or glutamate. This chain is Aspartate/glutamate leucyltransferase, found in Halorhodospira halophila (strain DSM 244 / SL1) (Ectothiorhodospira halophila (strain DSM 244 / SL1)).